The chain runs to 108 residues: Glutaredoxin-1 (108 aa).

In terms of domain architecture, Glutaredoxin spans 3–106 (EEFVQQRLTN…DILSSIGVLR (104 aa)). An intrachain disulfide couples Cys-23 to Cys-26.

This sequence belongs to the glutaredoxin family.

It localises to the virion. In terms of biological role, displays thioltransferase and dehydroascorbate reductase activities. In Variola virus (isolate Human/India/Ind3/1967) (VARV), this protein is Glutaredoxin-1 (OPG075).